A 320-amino-acid chain; its full sequence is BTB and MATH domain-containing protein 36 (320 aa).

The MATH domain maps to 7 to 136; it reads KGSIRFEIQN…DKHAVLEVQI (130 aa). The BTB domain occupies 160–227; sequence TDVVLVLEGK…IYPTHMLINS (68 aa).

The chain is BTB and MATH domain-containing protein 36 (bath-36) from Caenorhabditis elegans.